Here is a 500-residue protein sequence, read N- to C-terminus: Glycerol kinase (500 aa).

Thr-16 provides a ligand contact to ADP. 2 residues coordinate ATP: Thr-16 and Thr-17. Thr-16 lines the sn-glycerol 3-phosphate pocket. Position 20 (Arg-20) interacts with ADP. Arg-86, Glu-87, Tyr-138, and Asp-243 together coordinate sn-glycerol 3-phosphate. Residues Arg-86, Glu-87, Tyr-138, Asp-243, and Gln-244 each contribute to the glycerol site. ADP contacts are provided by Thr-265 and Gly-313. Thr-265, Gly-313, Gln-317, and Gly-414 together coordinate ATP. ADP is bound by residues Gly-414 and Asn-418.

Belongs to the FGGY kinase family.

It carries out the reaction glycerol + ATP = sn-glycerol 3-phosphate + ADP + H(+). It participates in polyol metabolism; glycerol degradation via glycerol kinase pathway; sn-glycerol 3-phosphate from glycerol: step 1/1. With respect to regulation, inhibited by fructose 1,6-bisphosphate (FBP). Functionally, key enzyme in the regulation of glycerol uptake and metabolism. Catalyzes the phosphorylation of glycerol to yield sn-glycerol 3-phosphate. The chain is Glycerol kinase from Trichormus variabilis (strain ATCC 29413 / PCC 7937) (Anabaena variabilis).